The following is a 106-amino-acid chain: MNALSGLRMAQESVGLISVAHQAFVTIAGCGVNALSGLRMAQESVGLISVAHQAFATTAGCGVDALSGLRVARESVGLISVAHQAFVTIAGCGVNALSGLRVAREL.

This is an uncharacterized protein from Escherichia coli (strain K12).